A 284-amino-acid chain; its full sequence is SF-assemblin (284 aa).

Positions 1 to 30 are disordered; that stretch reads PTPSPEARVASRPFLDSPLPGSPRSGSPTG. Residues 1 to 38 are nonhelical region; that stretch reads PTPSPEARVASRPFLDSPLPGSPRSGSPTGYITATKAI. Over residues 17 to 30 the composition is skewed to low complexity; it reads SPLPGSPRSGSPTG. Positions 39–284 are rod; sequence SAGKLEHVAE…QDGLRIVNNS (246 aa). 2 coiled-coil regions span residues 56 to 102 and 239 to 268; these read EIEL…QIQV and LDEI…QAVN.

Belongs to the SF-assemblin family. Consists of at least four isoforms including two phosphorylated.

The protein resides in the cytoplasm. Its subcellular location is the cytoskeleton. Functionally, major component of the striated microtubule-associated fibers (SMAFs; system-I-fibers). The protein is SF-assemblin of Spermatozopsis similis (Green alga).